Here is a 175-residue protein sequence, read N- to C-terminus: Thioredoxin M-type, chloroplastic (175 aa).

Residues 1–62 (MALETCLRGW…ARRPSRFVCK (62 aa)) constitute a chloroplast transit peptide. Positions 63–174 (CKNVVDEVIV…LCTIIDKYIG (112 aa)) constitute a Thioredoxin domain. A disulfide bond links Cys98 and Cys101.

It belongs to the thioredoxin family. Plant M-type subfamily. Forms a complex with heterodimeric ferredoxin-thioredoxin reductase (FTR) and ferredoxin.

The protein resides in the plastid. The protein localises to the chloroplast. Its function is as follows. Participates in various redox reactions through the reversible oxidation of the active center dithiol to a disulfide. The M form is known to activate NADP-malate dehydrogenase. The chain is Thioredoxin M-type, chloroplastic from Triticum aestivum (Wheat).